The sequence spans 384 residues: Probable inactive patatin-like protein 9 (384 aa).

Residues L33–V234 enclose the PNPLA domain. The GXGXXG signature appears at G37–G42. Catalysis depends on D221, which acts as the Proton acceptor. The DGA/G motif lies at D221–G223. The interval G363–R384 is disordered.

It belongs to the patatin family. Highly expressed in roots and at lower levels in flowers and siliques.

The protein is Probable inactive patatin-like protein 9 (PLP9) of Arabidopsis thaliana (Mouse-ear cress).